An 88-amino-acid chain; its full sequence is uncharacterized protein (88 aa).

The tract at residues 1-31 is disordered; it reads MIPRDPRSPAPDLSAINQPAGRAERRSGPAT.

This is an uncharacterized protein from Escherichia coli.